The primary structure comprises 410 residues: Cysteine desulfurase IscS (410 aa).

Pyridoxal 5'-phosphate contacts are provided by residues A80–T81, N160, Q188, and S208–H210. K211 is modified (N6-(pyridoxal phosphate)lysine). T248 is a pyridoxal 5'-phosphate binding site. C334 serves as the catalytic Cysteine persulfide intermediate. Residue C334 participates in [2Fe-2S] cluster binding.

Belongs to the class-V pyridoxal-phosphate-dependent aminotransferase family. NifS/IscS subfamily. Homodimer. Forms a heterotetramer with IscU, interacts with other sulfur acceptors. The cofactor is pyridoxal 5'-phosphate.

It is found in the cytoplasm. It catalyses the reaction (sulfur carrier)-H + L-cysteine = (sulfur carrier)-SH + L-alanine. It participates in cofactor biosynthesis; iron-sulfur cluster biosynthesis. Functionally, master enzyme that delivers sulfur to a number of partners involved in Fe-S cluster assembly, tRNA modification or cofactor biosynthesis. Catalyzes the removal of elemental sulfur atoms from cysteine to produce alanine. Functions as a sulfur delivery protein for Fe-S cluster synthesis onto IscU, an Fe-S scaffold assembly protein, as well as other S acceptor proteins. The protein is Cysteine desulfurase IscS of Rickettsia africae (strain ESF-5).